Reading from the N-terminus, the 350-residue chain is DNA polymerase IV (350 aa).

In terms of domain architecture, UmuC spans 5–181 (IMHYDMDAFY…KKIKIIPGVG (177 aa)). The Mg(2+) site is built by aspartate 9 and aspartate 99. Glutamate 100 is a catalytic residue.

The protein belongs to the DNA polymerase type-Y family. Monomer. Mg(2+) serves as cofactor.

Its subcellular location is the cytoplasm. The enzyme catalyses DNA(n) + a 2'-deoxyribonucleoside 5'-triphosphate = DNA(n+1) + diphosphate. Functionally, poorly processive, error-prone DNA polymerase involved in untargeted mutagenesis. Copies undamaged DNA at stalled replication forks, which arise in vivo from mismatched or misaligned primer ends. These misaligned primers can be extended by PolIV. Exhibits no 3'-5' exonuclease (proofreading) activity. May be involved in translesional synthesis, in conjunction with the beta clamp from PolIII. In Fusobacterium nucleatum subsp. nucleatum (strain ATCC 25586 / DSM 15643 / BCRC 10681 / CIP 101130 / JCM 8532 / KCTC 2640 / LMG 13131 / VPI 4355), this protein is DNA polymerase IV.